Consider the following 272-residue polypeptide: Shikimate dehydrogenase (NADP(+)) (272 aa).

Residues 14–16 (SKS) and Thr61 each bind shikimate. The active-site Proton acceptor is the Lys65. Glu77 serves as a coordination point for NADP(+). Residues Asn86 and Asp102 each coordinate shikimate. Residues 126–130 (GAGGA), 149–154 (NRTVSR), and Met213 each bind NADP(+). Residue Tyr215 participates in shikimate binding. Gly237 is a binding site for NADP(+).

The protein belongs to the shikimate dehydrogenase family. Homodimer.

The enzyme catalyses shikimate + NADP(+) = 3-dehydroshikimate + NADPH + H(+). It functions in the pathway metabolic intermediate biosynthesis; chorismate biosynthesis; chorismate from D-erythrose 4-phosphate and phosphoenolpyruvate: step 4/7. In terms of biological role, involved in the biosynthesis of the chorismate, which leads to the biosynthesis of aromatic amino acids. Catalyzes the reversible NADPH linked reduction of 3-dehydroshikimate (DHSA) to yield shikimate (SA). In Shigella sonnei (strain Ss046), this protein is Shikimate dehydrogenase (NADP(+)).